The chain runs to 362 residues: Ferrochelatase (362 aa).

2 residues coordinate Fe cation: histidine 212 and glutamate 294.

This sequence belongs to the ferrochelatase family.

The protein resides in the cytoplasm. It carries out the reaction heme b + 2 H(+) = protoporphyrin IX + Fe(2+). It functions in the pathway porphyrin-containing compound metabolism; protoheme biosynthesis; protoheme from protoporphyrin-IX: step 1/1. Catalyzes the ferrous insertion into protoporphyrin IX. This is Ferrochelatase from Leptospira biflexa serovar Patoc (strain Patoc 1 / Ames).